We begin with the raw amino-acid sequence, 189 residues long: Ribose 1,5-bisphosphate phosphokinase PhnN (189 aa).

10-17 serves as a coordination point for ATP; the sequence is GPSGSGKD.

It belongs to the ribose 1,5-bisphosphokinase family.

It carries out the reaction alpha-D-ribose 1,5-bisphosphate + ATP = 5-phospho-alpha-D-ribose 1-diphosphate + ADP. Its pathway is metabolic intermediate biosynthesis; 5-phospho-alpha-D-ribose 1-diphosphate biosynthesis; 5-phospho-alpha-D-ribose 1-diphosphate from D-ribose 5-phosphate (route II): step 3/3. Its function is as follows. Catalyzes the phosphorylation of ribose 1,5-bisphosphate to 5-phospho-D-ribosyl alpha-1-diphosphate (PRPP). The protein is Ribose 1,5-bisphosphate phosphokinase PhnN of Enterobacter lignolyticus (strain SCF1).